The chain runs to 102 residues: MAGQKIRIRLKAYDHEVIDSSAKKIVETVTRTGAKVAGPVPLPTEKNVYCVIRSPHNDKDSREHFEMRTHKRLIDIIDPTPKTVDSLMRLDLPAGVDISIKL.

This sequence belongs to the universal ribosomal protein uS10 family. Part of the 30S ribosomal subunit.

Functionally, involved in the binding of tRNA to the ribosomes. The polypeptide is Small ribosomal subunit protein uS10 (Planobispora rosea).